The sequence spans 209 residues: NADH-ubiquinone oxidoreductase subunit 9 (209 aa).

The protein belongs to the complex I 30 kDa subunit family. In terms of assembly, complex I is composed of about 45 different subunits.

It localises to the mitochondrion inner membrane. The catalysed reaction is a ubiquinone + NADH + 5 H(+)(in) = a ubiquinol + NAD(+) + 4 H(+)(out). In terms of biological role, core subunit of the mitochondrial membrane respiratory chain NADH dehydrogenase (Complex I) that is believed to belong to the minimal assembly required for catalysis. Complex I functions in the transfer of electrons from NADH to the respiratory chain. The immediate electron acceptor for the enzyme is believed to be ubiquinone. The sequence is that of NADH-ubiquinone oxidoreductase subunit 9 (nad9) from Dictyostelium discoideum (Social amoeba).